The primary structure comprises 207 residues: Large ribosomal subunit protein uL4 (207 aa).

The disordered stretch occupies residues 45–80 (RQGTHAVKNRSEVRGGGRKPWRQKGTGRARQGSTRS). Residues 60–71 (GGRKPWRQKGTG) show a composition bias toward basic residues.

This sequence belongs to the universal ribosomal protein uL4 family. Part of the 50S ribosomal subunit.

One of the primary rRNA binding proteins, this protein initially binds near the 5'-end of the 23S rRNA. It is important during the early stages of 50S assembly. It makes multiple contacts with different domains of the 23S rRNA in the assembled 50S subunit and ribosome. Functionally, forms part of the polypeptide exit tunnel. The sequence is that of Large ribosomal subunit protein uL4 from Oceanobacillus iheyensis (strain DSM 14371 / CIP 107618 / JCM 11309 / KCTC 3954 / HTE831).